A 192-amino-acid chain; its full sequence is Probable nicotinate-nucleotide adenylyltransferase (192 aa).

It belongs to the NadD family.

The catalysed reaction is nicotinate beta-D-ribonucleotide + ATP + H(+) = deamido-NAD(+) + diphosphate. Its pathway is cofactor biosynthesis; NAD(+) biosynthesis; deamido-NAD(+) from nicotinate D-ribonucleotide: step 1/1. Its function is as follows. Catalyzes the reversible adenylation of nicotinate mononucleotide (NaMN) to nicotinic acid adenine dinucleotide (NaAD). The sequence is that of Probable nicotinate-nucleotide adenylyltransferase from Cytophaga hutchinsonii (strain ATCC 33406 / DSM 1761 / CIP 103989 / NBRC 15051 / NCIMB 9469 / D465).